A 311-amino-acid polypeptide reads, in one-letter code: Mediator of RNA polymerase II transcription subunit 27 (311 aa).

Serine 132 carries the phosphoserine modification. Position 134 is an N6-methyllysine (lysine 134).

Belongs to the Mediator complex subunit 27 family. In terms of assembly, component of the Mediator complex, which is composed of MED1, MED4, MED6, MED7, MED8, MED9, MED10, MED11, MED12, MED13, MED13L, MED14, MED15, MED16, MED17, MED18, MED19, MED20, MED21, MED22, MED23, MED24, MED25, MED26, MED27, MED29, MED30, MED31, CCNC, CDK8 and CDC2L6/CDK11. The MED12, MED13, CCNC and CDK8 subunits form a distinct module termed the CDK8 module. Mediator containing the CDK8 module is less active than Mediator lacking this module in supporting transcriptional activation. Individual preparations of the Mediator complex lacking one or more distinct subunits have been variously termed ARC, CRSP, DRIP, PC2, SMCC and TRAP.

The protein resides in the nucleus. Component of the Mediator complex, a coactivator involved in the regulated transcription of nearly all RNA polymerase II-dependent genes. Mediator functions as a bridge to convey information from gene-specific regulatory proteins to the basal RNA polymerase II transcription machinery. Mediator is recruited to promoters by direct interactions with regulatory proteins and serves as a scaffold for the assembly of a functional preinitiation complex with RNA polymerase II and the general transcription factors. This is Mediator of RNA polymerase II transcription subunit 27 (Med27) from Mus musculus (Mouse).